We begin with the raw amino-acid sequence, 429 residues long: Enolase (429 aa).

Gln-162 contributes to the (2R)-2-phosphoglycerate binding site. Glu-204 functions as the Proton donor in the catalytic mechanism. Residues Asp-241, Glu-283, and Asp-310 each contribute to the Mg(2+) site. Residues Lys-335, Arg-364, Ser-365, and Lys-386 each coordinate (2R)-2-phosphoglycerate. Catalysis depends on Lys-335, which acts as the Proton acceptor.

This sequence belongs to the enolase family. Mg(2+) is required as a cofactor.

It is found in the cytoplasm. The protein resides in the secreted. The protein localises to the cell surface. The enzyme catalyses (2R)-2-phosphoglycerate = phosphoenolpyruvate + H2O. The protein operates within carbohydrate degradation; glycolysis; pyruvate from D-glyceraldehyde 3-phosphate: step 4/5. Its function is as follows. Catalyzes the reversible conversion of 2-phosphoglycerate (2-PG) into phosphoenolpyruvate (PEP). It is essential for the degradation of carbohydrates via glycolysis. The protein is Enolase of Mycolicibacterium vanbaalenii (strain DSM 7251 / JCM 13017 / BCRC 16820 / KCTC 9966 / NRRL B-24157 / PYR-1) (Mycobacterium vanbaalenii).